The sequence spans 756 residues: Nucleomorphin (756 aa).

Over residues 1–10 the composition is skewed to polar residues; that stretch reads MDLDYSSDNS. The tract at residues 1–113 is disordered; sequence MDLDYSSDNS…SQSNEDLSSS (113 aa). Composition is skewed to low complexity over residues 16–66 and 75–94; these read NQNN…RPSS and NNNN…NNNN. A compositionally biased stretch (polar residues) spans 95–113; sequence GATISHPPTSQSNEDLSSS. A BRCT domain is found at 124–216; that stretch reads LNSNIFENLG…ELLGVENYLV (93 aa). Disordered stretches follow at residues 229-251, 272-298, 359-403, and 422-463; these read NSSQ…INEQ, PSSL…LKSE, KIDL…NKNN, and TSST…LLNL. Composition is skewed to low complexity over residues 285–298, 364–401, and 422–432; these read LQTQ…LKSE, NNNN…NKNK, and TSSTSSTLSSS. A compositionally biased stretch (basic residues) spans 448 to 459; that stretch reads KSKKKFSQKKNH. The Nuclear localization signal motif lies at 464–480; it reads KKSYQDPEIIAHSRPRK. Residues 495 to 512 are calmodulin binding; sequence ANYISNLDGFKYYARANK. A compositionally biased stretch (polar residues) spans 514 to 529; it reads SLNSNATTSGGNNRSI. Residues 514–587 form a disordered region; that stretch reads SLNSNATTSG…SDEDDFDSDE (74 aa). Over residues 536–587 the composition is skewed to acidic residues; it reads YDDEEEDEEDEDEEDEEEDEEEEEEEEEEEEDYDDEDLNDEESDEDDFDSDE. Residues 537–588 form a DEED region region; sequence DDEEEDEEDEDEEDEEEDEEEEEEEEEEEEDYDDEDLNDEESDEDDFDSDED. Calmodulin binding stretches follow at residues 589–606 and 596–613; these read VSRF…KIYK and KLLQ…RFEH. 2 disordered regions span residues 613-639 and 660-700; these read HSRQ…SHSR and LSPT…RTNI. Over residues 668 to 691 the composition is skewed to polar residues; that stretch reads LSNQFHQDGGNNTTDGNLFNNFST.

As to quaternary structure, interacts with calmodulin and CBPD1 in the presence of Ca(2+).

Its subcellular location is the nucleus. This Dictyostelium discoideum (Social amoeba) protein is Nucleomorphin (numA).